The primary structure comprises 105 residues: uncharacterized protein (105 aa).

This is an uncharacterized protein from Schizosaccharomyces pombe (strain 972 / ATCC 24843) (Fission yeast).